Reading from the N-terminus, the 848-residue chain is Xylosyltransferase (848 aa).

Topologically, residues 1-14 (MSLHRTLRRFLRKW) are cytoplasmic. A helical; Signal-anchor for type II membrane protein transmembrane segment spans residues 15 to 35 (KALVYAVSFILLIQAFFTFQS). At 36 to 843 (SPNLMEEEHL…PKTELISVKP (808 aa)) the chain is on the lumenal side. Intrachain disulfides connect cysteine 145-cysteine 173, cysteine 189-cysteine 427, cysteine 446-cysteine 459, and cysteine 448-cysteine 457. UDP-alpha-D-xylose-binding positions include valine 219, aspartate 247, and 276 to 278 (TIW). N-linked (GlcNAc...) asparagine glycosylation is present at asparagine 306. A UDP-alpha-D-xylose-binding site is contributed by 379 to 380 (DW). Residues serine 460 and 482 to 483 (RK) each bind UDP-alpha-D-xylose. Cystine bridges form between cysteine 529–cysteine 811 and cysteine 794–cysteine 822. Residue asparagine 530 is glycosylated (N-linked (GlcNAc...) asparagine). The tract at residues 824–848 (NTNWSSLSPDPKTELISVKPDGRIR) is disordered. Asparagine 826 carries N-linked (GlcNAc...) asparagine glycosylation.

Belongs to the glycosyltransferase 14 family. XylT subfamily. A divalent metal cation serves as cofactor.

It is found in the endoplasmic reticulum membrane. It localises to the golgi apparatus membrane. The catalysed reaction is UDP-alpha-D-xylose + L-seryl-[protein] = 3-O-(beta-D-xylosyl)-L-seryl-[protein] + UDP + H(+). The protein operates within glycan metabolism; chondroitin sulfate biosynthesis. Its pathway is glycan metabolism; heparan sulfate biosynthesis. Catalyzes the first step in biosynthesis of glycosaminoglycan. Transfers D-xylose from UDP-D-xylose to specific serine residues of the core protein. Initial enzyme in the biosynthesis of chondroitin sulfate and dermatan sulfate proteoglycans in fibroblasts and chondrocytes. The sequence is that of Xylosyltransferase (xt) from Ciona intestinalis (Transparent sea squirt).